The chain runs to 329 residues: Taste receptor type 2 member 102 (329 aa).

At 1–9 (MNMESVLHN) the chain is on the extracellular side. A helical membrane pass occupies residues 10-30 (FATVLIYVEFIFGNLSNGFIV). Topologically, residues 31-47 (LSNFLDWVIKQKLSLID) are cytoplasmic. Residues 48-68 (KILLTLAISRITLIWEIYAWF) form a helical membrane-spanning segment. At 69-85 (KSLYDPSSFLIGIEFQI) the chain is on the extracellular side. The chain crosses the membrane as a helical span at residues 86-108 (IYFSWVLSSHFSLWLATTLSVFY). Residues 109 to 129 (LLRIANCSWQIFLYLKWRLKQ) are Cytoplasmic-facing. Residues 130 to 150 (LIVGMLLGSLVFLLGNLMQSM) traverse the membrane as a helical segment. The Extracellular portion of the chain corresponds to 151–181 (LEERFYQYGRNTSVNTMSNDLAMWTELIFFN). Asn-161 carries an N-linked (GlcNAc...) asparagine glycan. The helical transmembrane segment at 182 to 202 (MAMFSVIPFTLALISFLLLIF) threads the bilayer. The Cytoplasmic portion of the chain corresponds to 203–231 (SLWKHLQKMQLISRRHRDPSTKAHMNALR). A helical membrane pass occupies residues 232–252 (IMVSFLLLYTMHFLSLLISWI). Topologically, residues 253–262 (AQKHQSELAD) are extracellular. A helical membrane pass occupies residues 263–283 (IIGMITELMYPSVHSCILILG). The Cytoplasmic portion of the chain corresponds to 284–329 (NSKLKQTSLCMLRHLRCRLKGENITIAYSNQITSFCVFCVANKSMR).

This sequence belongs to the G-protein coupled receptor T2R family.

The protein resides in the membrane. Functionally, putative taste receptor which may play a role in the perception of bitterness. The polypeptide is Taste receptor type 2 member 102 (Mus musculus (Mouse)).